We begin with the raw amino-acid sequence, 185 residues long: TATA-box-binding protein 3 (185 aa).

A run of 2 repeats spans residues 7–84 (IENV…ANTL) and 100–178 (VQNI…KTEF).

This sequence belongs to the TBP family.

Its function is as follows. General factor that plays a role in the activation of archaeal genes transcribed by RNA polymerase. Binds specifically to the TATA box promoter element which lies close to the position of transcription initiation. The sequence is that of TATA-box-binding protein 3 from Methanosarcina mazei (strain ATCC BAA-159 / DSM 3647 / Goe1 / Go1 / JCM 11833 / OCM 88) (Methanosarcina frisia).